Reading from the N-terminus, the 152-residue chain is ADP-ribose glycohydrolase OARD1 (152 aa).

A2 carries the N-acetylalanine modification. Positions 2 to 152 (AGSPNEDSEG…TDIRITVYTL (151 aa)) constitute a Macro domain. At S4 the chain carries Phosphoserine. Residue L21 participates in substrate binding. Residue K84 is the Nucleophile of the active site. Residues 119–125 (RIGCGLD) and L152 contribute to the substrate site. Residue D125 is the Proton acceptor of the active site.

The protein resides in the nucleus. Its subcellular location is the nucleoplasm. It is found in the nucleolus. The protein localises to the chromosome. It carries out the reaction 2''-O-acetyl-ADP-D-ribose + H2O = ADP-D-ribose + acetate + H(+). The enzyme catalyses 5-O-(ADP-D-ribosyl)-L-glutamyl-[protein] + H2O = L-glutamyl-[protein] + ADP-D-ribose + H(+). It catalyses the reaction alpha-NAD(+) + H2O = ADP-D-ribose + nicotinamide + H(+). Subject to competitive inhibition by the product ADP-ribose. ADP-ribose glycohydrolase that hydrolyzes ADP-ribose and acts on different substrates, such as proteins ADP-ribosylated on glutamate and O-acetyl-ADP-D-ribose. Specifically acts as a glutamate mono-ADP-ribosylhydrolase by mediating the removal of mono-ADP-ribose attached to glutamate residues on proteins. Does not act on poly-ADP-ribosylated proteins: the poly-ADP-ribose chain of poly-ADP-ribosylated glutamate residues must by hydrolyzed into mono-ADP-ribosylated glutamate by PARG to become a substrate for OARD1. Deacetylates O-acetyl-ADP ribose, a signaling molecule generated by the deacetylation of acetylated lysine residues in histones and other proteins. Catalyzes the deacylation of O-acetyl-ADP-ribose, O-propionyl-ADP-ribose and O-butyryl-ADP-ribose, yielding ADP-ribose plus acetate, propionate and butyrate, respectively. In Bos taurus (Bovine), this protein is ADP-ribose glycohydrolase OARD1.